A 71-amino-acid chain; its full sequence is Pseudonajatoxin b (71 aa).

5 cysteine pairs are disulfide-bonded: cysteine 3–cysteine 21, cysteine 14–cysteine 42, cysteine 27–cysteine 31, cysteine 46–cysteine 58, and cysteine 59–cysteine 64.

It belongs to the three-finger toxin family. Long-chain subfamily. Type II alpha-neurotoxin sub-subfamily. Expressed by the venom gland.

The protein localises to the secreted. Functionally, binds with high affinity to muscular (alpha-1/CHRNA1) and neuronal (alpha-7/CHRNA7) nicotinic acetylcholine receptor (nAChR) and inhibits acetylcholine from binding to the receptor, thereby impairing neuromuscular and neuronal transmission. This is Pseudonajatoxin b from Pseudonaja textilis (Eastern brown snake).